Consider the following 301-residue polypeptide: Probable aspartoacylase (301 aa).

Positions 13 and 16 each coordinate Zn(2+). Residues Arg54 and Asn61 to Arg62 each bind substrate. Residue His105 coordinates Zn(2+). 2 residues coordinate substrate: Glu163 and Tyr273.

It belongs to the AspA/AstE family. Aspartoacylase subfamily. Zn(2+) is required as a cofactor.

It carries out the reaction an N-acyl-L-aspartate + H2O = a carboxylate + L-aspartate. The chain is Probable aspartoacylase from Prochlorococcus marinus (strain AS9601).